A 388-amino-acid chain; its full sequence is Succinate--CoA ligase [ADP-forming] subunit beta (388 aa).

In terms of domain architecture, ATP-grasp spans 9 to 244 (KEILRKFGVA…LDEEDPAEIE (236 aa)). ATP is bound by residues Lys46, 53 to 55 (GRG), Glu99, Ala102, and Glu107. Mg(2+) contacts are provided by Asn199 and Asp213. Substrate-binding positions include Asn264 and 321-323 (GIM).

This sequence belongs to the succinate/malate CoA ligase beta subunit family. As to quaternary structure, heterotetramer of two alpha and two beta subunits. The cofactor is Mg(2+).

The catalysed reaction is succinate + ATP + CoA = succinyl-CoA + ADP + phosphate. It carries out the reaction GTP + succinate + CoA = succinyl-CoA + GDP + phosphate. Its pathway is carbohydrate metabolism; tricarboxylic acid cycle; succinate from succinyl-CoA (ligase route): step 1/1. Its function is as follows. Succinyl-CoA synthetase functions in the citric acid cycle (TCA), coupling the hydrolysis of succinyl-CoA to the synthesis of either ATP or GTP and thus represents the only step of substrate-level phosphorylation in the TCA. The beta subunit provides nucleotide specificity of the enzyme and binds the substrate succinate, while the binding sites for coenzyme A and phosphate are found in the alpha subunit. The sequence is that of Succinate--CoA ligase [ADP-forming] subunit beta from Burkholderia ambifaria (strain MC40-6).